A 390-amino-acid polypeptide reads, in one-letter code: Putative cyclin-F2-1 (390 aa).

Positions 135-154 (YNGDDDAPAPDDSMASRPQL) are disordered.

The protein belongs to the cyclin family. Cyclin F subfamily.

This is Putative cyclin-F2-1 (CycF2-1) from Oryza sativa subsp. japonica (Rice).